The primary structure comprises 153 residues: Putative pre-16S rRNA nuclease (153 aa).

Belongs to the YqgF nuclease family.

The protein resides in the cytoplasm. Could be a nuclease involved in processing of the 5'-end of pre-16S rRNA. The chain is Putative pre-16S rRNA nuclease from Prochlorococcus marinus (strain MIT 9215).